The chain runs to 707 residues: Complement C1r-A subcomponent (707 aa).

An N-terminal signal peptide occupies residues 1–16 (MWLFALLVTLFYGVEG). The CUB 1 domain maps to 17 to 140 (SIYLPQKLYG…KGFLAYYQAV (124 aa)). Ca(2+) is bound by residues Glu-65, Asp-73, and Asp-118. Cys-70 and Cys-88 are disulfide-bonded. Asn-124 carries an N-linked (GlcNAc...) asparagine glycan. 3 residues coordinate Ca(2+): Asp-141, Leu-142, and Glu-144. Residues 141–189 (DLDECASQPNSVEEGLQPRCQHLCHNYVGGYFCSCHPGYELQKDGQSCQ) form the EGF-like; calcium-binding domain. Cystine bridges form between Cys-145-Cys-164, Cys-160-Cys-173, Cys-175-Cys-188, and Cys-192-Cys-219. 3 residues coordinate Ca(2+): Asn-166, Tyr-167, and Gly-170. Asn-166 is modified ((3R)-3-hydroxyasparagine). The CUB 2 domain occupies 192 to 304 (CSSELYTEPS…RGWKLHYTTE (113 aa)). Phosphoserine; by CK2 is present on Ser-205. N-linked (GlcNAc...) asparagine glycosylation is present at Asn-220. 4 residues coordinate Ca(2+): Asp-242, Asp-252, Asp-289, and Asp-293. Cys-249 and Cys-267 are disulfide-bonded. Sushi domains are found at residues 306-372 (IKCP…RCKI) and 373-448 (KNCG…RCLP). Cystine bridges form between Cys-308-Cys-357, Cys-337-Cys-370, Cys-375-Cys-428, Cys-405-Cys-446, and Cys-450-Cys-579. The region spanning 463–704 (IIRGQPARPG…YVDWIKKEMG (242 aa)) is the Peptidase S1 domain. Active-site charge relay system residues include His-501 and Asp-559. The N-linked (GlcNAc...) asparagine glycan is linked to Asn-583. 2 disulfides stabilise this stretch: Cys-622-Cys-641 and Cys-652-Cys-682. Catalysis depends on Ser-656, which acts as the Charge relay system.

It belongs to the peptidase S1 family. In terms of assembly, core component of the complement C1 complex, a calcium-dependent complex composed of 1 molecule of the C1Q subcomplex, 2 molecules of C1R and 2 molecules of C1S. The C1Q subcomplex is composed 18 subunits: 3 chains of C1QA, C1QB, and C1QC trimerize to form 6 collagen-like triple helices connected to six globular ligand-recognition modules. Within the C1 complex, C1R is a dimer of identical chains, each of which is activated by cleavage into two chains, heavy and light, connected by disulfide bonds. Post-translationally, cleaved and activated by autocatalytic processing to generate Complement C1r subcomponent heavy and light chains that are connected by disulfide bonds. The iron and 2-oxoglutarate dependent 3-hydroxylation of aspartate and asparagine is (R) stereospecific within EGF domains.

The protein localises to the secreted. It localises to the cell surface. It catalyses the reaction Selective cleavage of Lys(or Arg)-|-Ile bond in complement subcomponent C1s to form the active form of C1s (EC 3.4.21.42).. Activated by the C1Q subcomplex of the C1 complex following C1Q binding to immunoglobulins (IgG or IgM) complexed with antigens to form antigen-antibody complexes on the surface of pathogens. Immunoglobulin-binding promotes autoactivation of C1R, which results in the cleavage of the Arg-Ile bond in the catalytic domain. Functionally, serine protease component of the complement C1 complex, a multiprotein complex that initiates the classical pathway of the complement system, a cascade of proteins that leads to phagocytosis and breakdown of pathogens and signaling that strengthens the adaptive immune system. C1R catalyzes the first enzymatic step in the classical complement pathway: it is activated by the C1Q subcomplex of the C1 complex, which associates with IgG or IgM immunoglobulins complexed with antigens to form antigen-antibody complexes on the surface of pathogens. Immunoglobulin-binding promotes the autocatalytic cleavage and activation of C1R. Activated C1R then cleaves and activates C1S, the second protease of the classical complement pathway. It is unclear if C1R activates C1S within single, strained C1 complexes or between neighboring C1 complexes on surfaces. This chain is Complement C1r-A subcomponent (C1ra), found in Mus musculus (Mouse).